We begin with the raw amino-acid sequence, 61 residues long: Large ribosomal subunit protein bL32 (61 aa).

Belongs to the bacterial ribosomal protein bL32 family.

This chain is Large ribosomal subunit protein bL32, found in Syntrophus aciditrophicus (strain SB).